Here is a 229-residue protein sequence, read N- to C-terminus: UPF0758 protein CLH_0547 (229 aa).

Residues 107-229 (KIMSPNDIAM…FISLKEKGFI (123 aa)) form the MPN domain. Residues histidine 178, histidine 180, and aspartate 191 each coordinate Zn(2+). A JAMM motif motif is present at residues 178-191 (HNHPSGDPTPSKED).

The protein belongs to the UPF0758 family.

The protein is UPF0758 protein CLH_0547 of Clostridium botulinum (strain Alaska E43 / Type E3).